The sequence spans 451 residues: D-aminoacyl-tRNA deacylase (451 aa).

A disordered region spans residues 410–437 (RTADIPEGPKFGKLASGESVEIDGEEID).

This sequence belongs to the DtdA deacylase family. Monomer. Zn(2+) serves as cofactor.

It carries out the reaction a D-aminoacyl-tRNA + H2O = a tRNA + a D-alpha-amino acid + H(+). It catalyses the reaction glycyl-tRNA(Ala) + H2O = tRNA(Ala) + glycine + H(+). In terms of biological role, D-aminoacyl-tRNA deacylase with broad substrate specificity. By recycling D-aminoacyl-tRNA to D-amino acids and free tRNA molecules, this enzyme counteracts the toxicity associated with the formation of D-aminoacyl-tRNA entities in vivo. The chain is D-aminoacyl-tRNA deacylase from Haloarcula marismortui (strain ATCC 43049 / DSM 3752 / JCM 8966 / VKM B-1809) (Halobacterium marismortui).